The following is a 640-amino-acid chain: ATP-dependent rRNA helicase spb4 (640 aa).

The Q motif signature appears at Trp14–Ala42. Residues Ile45–Val249 enclose the Helicase ATP-binding domain. Ala58–Thr65 lines the ATP pocket. The short motif at Asp197–Asp200 is the DEAD box element. One can recognise a Helicase C-terminal domain in the interval Ala283–Ala437. The stretch at Ala521–Asp629 forms a coiled coil. 2 disordered regions span residues Arg531 to Lys595 and Arg607 to Asp640. Residues Lys568–Lys582 are compositionally biased toward basic residues. A compositionally biased stretch (basic and acidic residues) spans Ala583 to Lys595. Acidic residues predominate over residues Gly630–Asp640.

It belongs to the DEAD box helicase family. DDX55/SPB4 subfamily. In terms of assembly, component of pre-60S ribosomal complexes.

Its subcellular location is the nucleus. The protein resides in the nucleolus. It catalyses the reaction ATP + H2O = ADP + phosphate + H(+). Its function is as follows. ATP-binding RNA helicase involved in the biogenesis of 60S ribosomal subunits. Binds 90S pre-ribosomal particles and dissociates from pre-60S ribosomal particles after processing of 27SB pre-rRNA. Required for the normal formation of 18S rRNA through the processing of pre-rRNAs at sites A0, A1 and A2, and the normal formation of 25S and 5.8S rRNAs through the processing of pre-rRNAs at sites C1 and C2. This is ATP-dependent rRNA helicase spb4 from Neosartorya fischeri (strain ATCC 1020 / DSM 3700 / CBS 544.65 / FGSC A1164 / JCM 1740 / NRRL 181 / WB 181) (Aspergillus fischerianus).